Here is a 677-residue protein sequence, read N- to C-terminus: Transketolase (677 aa).

Substrate is bound at residue His-27. Thiamine diphosphate-binding positions include His-66 and Gly-114 to Leu-116. Asp-155 lines the Mg(2+) pocket. Residues Gly-156 and Asn-185 each coordinate thiamine diphosphate. Mg(2+) contacts are provided by Asn-185 and Ile-187. His-261, Arg-356, and Ser-383 together coordinate substrate. Position 261 (His-261) interacts with thiamine diphosphate. Residues Glu-415 and Phe-442 each coordinate thiamine diphosphate. Glu-415 serves as the catalytic Proton donor. Substrate contacts are provided by His-466, Asp-474, and Arg-525.

This sequence belongs to the transketolase family. In terms of assembly, homodimer. Mg(2+) serves as cofactor. Requires Ca(2+) as cofactor. Mn(2+) is required as a cofactor. The cofactor is Co(2+). It depends on thiamine diphosphate as a cofactor.

The catalysed reaction is D-sedoheptulose 7-phosphate + D-glyceraldehyde 3-phosphate = aldehydo-D-ribose 5-phosphate + D-xylulose 5-phosphate. In terms of biological role, catalyzes the transfer of a two-carbon ketol group from a ketose donor to an aldose acceptor, via a covalent intermediate with the cofactor thiamine pyrophosphate. The sequence is that of Transketolase (TKT) from Scheffersomyces stipitis (strain ATCC 58785 / CBS 6054 / NBRC 10063 / NRRL Y-11545) (Yeast).